The following is a 471-amino-acid chain: WASH complex subunit 1 (471 aa).

The required for WASH complex assembly stretch occupies residues 1-54; the sequence is MTPTGTQHSLAGQTYAVPLIQPDLRREEAIQQVADALQYLQKVSGDIFSRISQR. A WHD1 region spans residues 1-167; sequence MTPTGTQHSL…EGLGGLPSNI (167 aa). Positions 297-471 are disordered; sequence EDGVLTARPP…GEEDEDDWES (175 aa). Pro residues predominate over residues 304 to 336; sequence RPPPPPPPPPPPAPAVLMSVPPPPPPPQAPPGQ. The tract at residues 353-471 is VCA; the sequence is QGAPKEVVDP…GEEDEDDWES (119 aa). Positions 365–387 constitute a WH2 domain; that stretch reads GRATLLESIRQAGGIGKAKLRSV. Basic and acidic residues predominate over residues 386–402; sequence SVKERKLEKKKQKEQEQ. The span at 428-442 shows a compositional bias: gly residues; it reads SGKGPGSGASEGPGG. Positions 462–471 are enriched in acidic residues; it reads GEEDEDDWES.

It belongs to the WASH1 family. As to quaternary structure, component of the WASH core complex also described as WASH regulatory complex SHRC composed of WASHC1, WASHC2, WASHC3, WASHC4 and WASHC5. The WASH core complex associates with the F-actin-capping protein dimer (formed by CAPZA1, CAPZA2 or CAPZA3 and CAPZB); the assembly has been initially described as WASH complex. Interacts (via WHD1 region) with WASHC2; the interaction is direct. Interacts with alpha-tubulin. Interacts with BECN1; WASHC1 and AMBRA1 can competitively interact with BECN1. Interacts with BLOC1S2; may associate with the BLOC-1 complex. Interacts with tubulin gamma chain (TUBG1 or TUBG2). Interacts with TBC1D23.

The protein resides in the early endosome membrane. It localises to the recycling endosome membrane. The protein localises to the late endosome. Its subcellular location is the cytoplasmic vesicle. It is found in the autophagosome. The protein resides in the cytoplasm. It localises to the cytoskeleton. The protein localises to the microtubule organizing center. Its subcellular location is the centrosome. It is found in the centriole. In terms of biological role, acts as a component of the WASH core complex that functions as a nucleation-promoting factor (NPF) at the surface of endosomes, where it recruits and activates the Arp2/3 complex to induce actin polymerization, playing a key role in the fission of tubules that serve as transport intermediates during endosome sorting. Involved in endocytic trafficking of EGF. Involved in transferrin receptor recycling. Regulates the trafficking of endosomal alpha5beta1 integrin to the plasma membrane and involved in invasive cell migration. In T-cells involved in endosome-to-membrane recycling of receptors including T-cell receptor (TCR), CD28 and ITGAL; proposed to be implicated in T-cell proliferation and effector function. In dendritic cells involved in endosome-to-membrane recycling of major histocompatibility complex (MHC) class II probably involving retromer and subsequently allowing antigen sampling, loading and presentation during T-cell activation. Involved in negative regulation of autophagy independently from its role in endosomal sorting by inhibiting BECN1 ubiquitination to inactivate PIK3C3/Vps34 activity. In Bos taurus (Bovine), this protein is WASH complex subunit 1.